The chain runs to 248 residues: Probable transcriptional regulatory protein FTF0655 (248 aa).

Belongs to the TACO1 family.

It is found in the cytoplasm. This Francisella tularensis subsp. tularensis (strain FSC 198) protein is Probable transcriptional regulatory protein FTF0655.